We begin with the raw amino-acid sequence, 61 residues long: MPVVHTCTYCGRSIEPGTGLMYVKNDGSVLWFCSSKCFKLWRMGRDPRKLKWTERYTQLRR.

Zn(2+)-binding residues include C7, C10, C33, and C37. A C4-type zinc finger spans residues 7–37; sequence CTYCGRSIEPGTGLMYVKNDGSVLWFCSSKC.

Belongs to the eukaryotic ribosomal protein eL24 family. In terms of assembly, part of the 50S ribosomal subunit. Forms a cluster with proteins L3 and L14. Zn(2+) serves as cofactor.

Binds to the 23S rRNA. The polypeptide is Large ribosomal subunit protein eL24 (Hyperthermus butylicus (strain DSM 5456 / JCM 9403 / PLM1-5)).